The primary structure comprises 383 residues: Probable acyl-CoA dehydrogenase YdiO (383 aa).

It belongs to the acyl-CoA dehydrogenase family. The cofactor is FAD.

It carries out the reaction a 2,3-saturated acyl-CoA + A = a 2,3-dehydroacyl-CoA + AH2. In Escherichia coli O157:H7, this protein is Probable acyl-CoA dehydrogenase YdiO (ydiO).